The following is a 444-amino-acid chain: tRNA-2-methylthio-N(6)-dimethylallyladenosine synthase (444 aa).

In terms of domain architecture, MTTase N-terminal spans 8–122 (KTFYIETFGC…LAEMLVQIES (115 aa)). Residues cysteine 17, cysteine 53, cysteine 85, cysteine 160, cysteine 164, and cysteine 167 each contribute to the [4Fe-4S] cluster site. The 231-residue stretch at 146–376 (RGNAHRGYIT…MEHQREIQRA (231 aa)) folds into the Radical SAM core domain. The TRAM domain maps to 379-444 (RKHIGETIEV…PNSLVGELVG (66 aa)).

This sequence belongs to the methylthiotransferase family. MiaB subfamily. In terms of assembly, monomer. It depends on [4Fe-4S] cluster as a cofactor.

It localises to the cytoplasm. It catalyses the reaction N(6)-dimethylallyladenosine(37) in tRNA + (sulfur carrier)-SH + AH2 + 2 S-adenosyl-L-methionine = 2-methylsulfanyl-N(6)-dimethylallyladenosine(37) in tRNA + (sulfur carrier)-H + 5'-deoxyadenosine + L-methionine + A + S-adenosyl-L-homocysteine + 2 H(+). In terms of biological role, catalyzes the methylthiolation of N6-(dimethylallyl)adenosine (i(6)A), leading to the formation of 2-methylthio-N6-(dimethylallyl)adenosine (ms(2)i(6)A) at position 37 in tRNAs that read codons beginning with uridine. The sequence is that of tRNA-2-methylthio-N(6)-dimethylallyladenosine synthase from Koribacter versatilis (strain Ellin345).